The following is a 391-amino-acid chain: Digeranylgeranylglycerophospholipid reductase (391 aa).

Residues glycine 18, glutamate 37, cysteine 48, alanine 49, alanine 51, arginine 98, alanine 122, aspartate 279, glycine 291, and isoleucine 292 each contribute to the FAD site.

It belongs to the geranylgeranyl reductase family. DGGGPL reductase subfamily. FAD is required as a cofactor.

The catalysed reaction is a 2,3-bis-O-phytanyl-sn-glycerol 1-phospholipid + 8 A = a 2,3-bis-O-(geranylgeranyl)-sn-glycerol 1-phospholipid + 8 AH2. The enzyme catalyses 2,3-bis-O-(phytanyl)-sn-glycerol 1-phosphate + 8 A = 2,3-bis-O-(geranylgeranyl)-sn-glycerol 1-phosphate + 8 AH2. It carries out the reaction CDP-2,3-bis-O-(geranylgeranyl)-sn-glycerol + 8 AH2 = CDP-2,3-bis-O-(phytanyl)-sn-glycerol + 8 A. It catalyses the reaction archaetidylserine + 8 AH2 = 2,3-bis-O-phytanyl-sn-glycero-3-phospho-L-serine + 8 A. It participates in membrane lipid metabolism; glycerophospholipid metabolism. Its function is as follows. Is involved in the reduction of 2,3-digeranylgeranylglycerophospholipids (unsaturated archaeols) into 2,3-diphytanylglycerophospholipids (saturated archaeols) in the biosynthesis of archaeal membrane lipids. Catalyzes the formation of archaetidic acid (2,3-di-O-phytanyl-sn-glyceryl phosphate) from 2,3-di-O-geranylgeranylglyceryl phosphate (DGGGP) via the hydrogenation of each double bond of the isoprenoid chains. Is also probably able to reduce double bonds of geranyl groups in CDP-2,3-bis-O-(geranylgeranyl)-sn-glycerol and archaetidylserine, thus acting at various stages in the biosynthesis of archaeal membrane lipids. The protein is Digeranylgeranylglycerophospholipid reductase of Methanocaldococcus jannaschii (strain ATCC 43067 / DSM 2661 / JAL-1 / JCM 10045 / NBRC 100440) (Methanococcus jannaschii).